A 434-amino-acid chain; its full sequence is Anaerobic glycerol-3-phosphate dehydrogenase subunit B (434 aa).

It belongs to the anaerobic G-3-P dehydrogenase subunit B family. In terms of assembly, composed of a catalytic GlpA/B dimer and of membrane bound GlpC. Requires FMN as cofactor.

It catalyses the reaction a quinone + sn-glycerol 3-phosphate = dihydroxyacetone phosphate + a quinol. The protein operates within polyol metabolism; glycerol degradation via glycerol kinase pathway; glycerone phosphate from sn-glycerol 3-phosphate (anaerobic route): step 1/1. Its function is as follows. Conversion of glycerol 3-phosphate to dihydroxyacetone. Uses fumarate or nitrate as electron acceptor. The polypeptide is Anaerobic glycerol-3-phosphate dehydrogenase subunit B (Histophilus somni (strain 2336) (Haemophilus somnus)).